The sequence spans 128 residues: Probable 4-amino-4-deoxy-L-arabinose-phosphoundecaprenol flippase subunit ArnF (128 aa).

Residues 1–2 are Cytoplasmic-facing; sequence MG. A helical membrane pass occupies residues 3 to 23; that stretch reads LIWGLFSVIIASVAQLSLGFA. Residues 24–35 are Periplasmic-facing; it reads ASHLPPMTHLWD. Residues 36-56 traverse the membrane as a helical segment; the sequence is FIAALLAFGLDARILLLGLLG. At 57–75 the chain is on the cytoplasmic side; the sequence is YLLSVFCWYKTLHKLALSK. Residues 76–96 form a helical membrane-spanning segment; the sequence is AYALLSMSYVLVWIASMVLPG. The Periplasmic portion of the chain corresponds to 97 to 100; the sequence is REGT. The helical transmembrane segment at 101-121 threads the bilayer; that stretch reads FSLKALLGVACIMSGLMLIFL. The Cytoplasmic portion of the chain corresponds to 122–128; that stretch reads PTTKQRY.

The protein belongs to the ArnF family. As to quaternary structure, heterodimer of ArnE and ArnF.

It localises to the cell inner membrane. Its pathway is bacterial outer membrane biogenesis; lipopolysaccharide biosynthesis. Functionally, translocates 4-amino-4-deoxy-L-arabinose-phosphoundecaprenol (alpha-L-Ara4N-phosphoundecaprenol) from the cytoplasmic to the periplasmic side of the inner membrane. The protein is Probable 4-amino-4-deoxy-L-arabinose-phosphoundecaprenol flippase subunit ArnF of Shigella flexneri serotype 5b (strain 8401).